A 167-amino-acid polypeptide reads, in one-letter code: Endoribonuclease YbeY (167 aa).

3 residues coordinate Zn(2+): H132, H136, and H142.

The protein belongs to the endoribonuclease YbeY family. Requires Zn(2+) as cofactor.

It is found in the cytoplasm. In terms of biological role, single strand-specific metallo-endoribonuclease involved in late-stage 70S ribosome quality control and in maturation of the 3' terminus of the 16S rRNA. In Clostridium beijerinckii (strain ATCC 51743 / NCIMB 8052) (Clostridium acetobutylicum), this protein is Endoribonuclease YbeY.